The sequence spans 876 residues: Probable galactinol--sucrose galactosyltransferase 4 (876 aa).

Phosphoserine occurs at positions 7 and 9.

Belongs to the glycosyl hydrolases 36 family.

The catalysed reaction is alpha-D-galactosyl-(1-&gt;3)-1D-myo-inositol + sucrose = raffinose + myo-inositol. Functionally, transglycosidase operating by a ping-pong reaction mechanism. Involved in the synthesis of raffinose, a major soluble carbohydrate in seeds, roots and tubers. This is Probable galactinol--sucrose galactosyltransferase 4 (RFS4) from Arabidopsis thaliana (Mouse-ear cress).